We begin with the raw amino-acid sequence, 272 residues long: Diaminopimelate epimerase (272 aa).

Substrate contacts are provided by N11 and N63. C72 (proton donor) is an active-site residue. Residues 73–74 (GN), N190, and 208–209 (ER) each bind substrate. C217 functions as the Proton acceptor in the catalytic mechanism. 218 to 219 (GT) lines the substrate pocket.

It belongs to the diaminopimelate epimerase family. In terms of assembly, homodimer.

The protein localises to the cytoplasm. It carries out the reaction (2S,6S)-2,6-diaminopimelate = meso-2,6-diaminopimelate. The protein operates within amino-acid biosynthesis; L-lysine biosynthesis via DAP pathway; DL-2,6-diaminopimelate from LL-2,6-diaminopimelate: step 1/1. Catalyzes the stereoinversion of LL-2,6-diaminopimelate (L,L-DAP) to meso-diaminopimelate (meso-DAP), a precursor of L-lysine and an essential component of the bacterial peptidoglycan. This is Diaminopimelate epimerase from Clostridium perfringens (strain 13 / Type A).